Here is a 341-residue protein sequence, read N- to C-terminus: 33 kDa chaperonin (341 aa).

2 disulfide bridges follow: C245/C247 and C278/C281.

This sequence belongs to the HSP33 family. Under oxidizing conditions two disulfide bonds are formed involving the reactive cysteines. Under reducing conditions zinc is bound to the reactive cysteines and the protein is inactive.

It localises to the cytoplasm. Functionally, redox regulated molecular chaperone. Protects both thermally unfolding and oxidatively damaged proteins from irreversible aggregation. Plays an important role in the bacterial defense system toward oxidative stress. This is 33 kDa chaperonin from Thermus thermophilus (strain ATCC BAA-163 / DSM 7039 / HB27).